The chain runs to 120 residues: uncharacterized protein (120 aa).

This is an uncharacterized protein from Bacillus subtilis (strain 168).